Reading from the N-terminus, the 334-residue chain is MPGGEGENRVGEGIQSLKQLHALPWDEKTENEMLRSRLDEQSQLICMLKQRADETQIKWQHLERVNGELERQSGEAAQRFQSERERGERLEERFAILASNHQQMIRFKDEYKQQNEELRQLCDTMRESKYPELLHRDRCIQELRDQLGDTETRLKEQEMNYGRKLDTLSAKVEQLEGEKRTGSLELGDLTHRLKVSEETRHEAQEKLARLEEIKKAEKAEADKRLEEIKKEKQELLNLCMERGRTLQDRQREAAELSVRLQEAQKSLEKAEESYQRDKAAVDADIRVSDLQRKLEDGENQFEQLRRDFEAYKKHSGDLLTKERELNSKLRHLIG.

The stretch at 75–318 forms a coiled coil; it reads EAAQRFQSER…EAYKKHSGDL (244 aa).

This sequence belongs to the CCDC89 family. Interacts (via C-terminus) with hey1/bc8 (via Orange domain). As to expression, in adults, expressed at varying levels in different organs including the liver and brain, with highest expression in the testis.

It localises to the cytoplasm. The protein localises to the nucleus. This chain is Coiled-coil domain-containing protein 89, found in Xenopus laevis (African clawed frog).